Reading from the N-terminus, the 429-residue chain is Phosphoglucosamine mutase (429 aa).

Serine 96 serves as the catalytic Phosphoserine intermediate. Serine 96, aspartate 230, aspartate 232, and aspartate 234 together coordinate Mg(2+). Serine 96 carries the phosphoserine modification.

Belongs to the phosphohexose mutase family. Mg(2+) is required as a cofactor. Post-translationally, activated by phosphorylation.

It catalyses the reaction alpha-D-glucosamine 1-phosphate = D-glucosamine 6-phosphate. Catalyzes the conversion of glucosamine-6-phosphate to glucosamine-1-phosphate. The polypeptide is Phosphoglucosamine mutase (Thermotoga maritima (strain ATCC 43589 / DSM 3109 / JCM 10099 / NBRC 100826 / MSB8)).